A 400-amino-acid chain; its full sequence is Aspartate aminotransferase (400 aa).

L-aspartate is bound by residues Gly42 and Asn180. Position 241 is an N6-(pyridoxal phosphate)lysine (Lys241). Arg373 is a binding site for L-aspartate.

It belongs to the class-I pyridoxal-phosphate-dependent aminotransferase family. As to quaternary structure, homodimer. The cofactor is pyridoxal 5'-phosphate.

Its subcellular location is the cytoplasm. The catalysed reaction is L-aspartate + 2-oxoglutarate = oxaloacetate + L-glutamate. This is Aspartate aminotransferase (aspC) from Sulfolobus acidocaldarius (strain ATCC 33909 / DSM 639 / JCM 8929 / NBRC 15157 / NCIMB 11770).